A 154-amino-acid polypeptide reads, in one-letter code: Myoglobin (154 aa).

The 147-residue stretch at 2–148 folds into the Globin domain; that stretch reads GLSEAEWQLV…FRKDIAAKYK (147 aa). Ser-4 carries the post-translational modification Phosphoserine. Residue His-65 participates in nitrite binding. His-65 lines the O2 pocket. The residue at position 68 (Thr-68) is a Phosphothreonine. Heme b is bound at residue His-94.

It belongs to the globin family. Monomeric.

It is found in the cytoplasm. The protein localises to the sarcoplasm. The enzyme catalyses Fe(III)-heme b-[protein] + nitric oxide + H2O = Fe(II)-heme b-[protein] + nitrite + 2 H(+). It catalyses the reaction H2O2 + AH2 = A + 2 H2O. Its function is as follows. Monomeric heme protein which primary function is to store oxygen and facilitate its diffusion within muscle tissues. Reversibly binds oxygen through a pentacoordinated heme iron and enables its timely and efficient release as needed during periods of heightened demand. Depending on the oxidative conditions of tissues and cells, and in addition to its ability to bind oxygen, it also has a nitrite reductase activity whereby it regulates the production of bioactive nitric oxide. Under stress conditions, like hypoxia and anoxia, it also protects cells against reactive oxygen species thanks to its pseudoperoxidase activity. The chain is Myoglobin (MB) from Ziphius cavirostris (Cuvier's beaked whale).